Consider the following 236-residue polypeptide: 7-cyano-7-deazaguanine synthase (236 aa).

7–17 (CSGGLDSVSLA) is an ATP binding site. The Zn(2+) site is built by C185, C193, C196, and C199.

Belongs to the QueC family. Zn(2+) serves as cofactor.

The catalysed reaction is 7-carboxy-7-deazaguanine + NH4(+) + ATP = 7-cyano-7-deazaguanine + ADP + phosphate + H2O + H(+). The protein operates within purine metabolism; 7-cyano-7-deazaguanine biosynthesis. Functionally, catalyzes the ATP-dependent conversion of 7-carboxy-7-deazaguanine (CDG) to 7-cyano-7-deazaguanine (preQ(0)). The chain is 7-cyano-7-deazaguanine synthase from Sinorhizobium fredii (strain NBRC 101917 / NGR234).